The sequence spans 280 residues: Probable holocytochrome-c-type synthase (280 aa).

Positions 1-95 are disordered; the sequence is MGSSQSTPKV…FALPTKREKS (95 aa). 2 HRM repeats span residues 35–40 and 56–61; these read QCPLTP and ACPVGA.

This sequence belongs to the cytochrome c-type heme lyase family.

The protein resides in the mitochondrion inner membrane. It catalyses the reaction holo-[cytochrome c] = apo-[cytochrome c] + heme b. In terms of biological role, probable lyase that catalyzes the covalent linking of the heme group to the cytochrome C apoprotein to produce the mature functional cytochrome. The sequence is that of Probable holocytochrome-c-type synthase (cchl-1) from Caenorhabditis elegans.